Consider the following 667-residue polypeptide: DNA ligase (667 aa).

Residues 32–36 (DSEYD), 81–82 (SL), and glutamate 110 contribute to the NAD(+) site. Lysine 112 acts as the N6-AMP-lysine intermediate in catalysis. 4 residues coordinate NAD(+): arginine 133, glutamate 167, lysine 283, and lysine 307. Zn(2+) is bound by residues cysteine 401, cysteine 404, cysteine 419, and cysteine 424. The BRCT domain maps to 586 to 667 (EGHPEFSGKT…FVDKQNELNS (82 aa)).

Belongs to the NAD-dependent DNA ligase family. LigA subfamily. Mg(2+) is required as a cofactor. Mn(2+) serves as cofactor.

It carries out the reaction NAD(+) + (deoxyribonucleotide)n-3'-hydroxyl + 5'-phospho-(deoxyribonucleotide)m = (deoxyribonucleotide)n+m + AMP + beta-nicotinamide D-nucleotide.. Its function is as follows. DNA ligase that catalyzes the formation of phosphodiester linkages between 5'-phosphoryl and 3'-hydroxyl groups in double-stranded DNA using NAD as a coenzyme and as the energy source for the reaction. It is essential for DNA replication and repair of damaged DNA. This is DNA ligase from Staphylococcus aureus (strain MRSA252).